The chain runs to 50 residues: Major pollen allergen Ole e 6 (50 aa).

Disulfide bonds link cysteine 8–cysteine 34, cysteine 12–cysteine 30, and cysteine 16–cysteine 26.

As to expression, expressed in pollen.

This chain is Major pollen allergen Ole e 6 (OLE6), found in Olea europaea (Common olive).